We begin with the raw amino-acid sequence, 330 residues long: Ferredoxin--NADP reductase (330 aa).

FAD contacts are provided by Thr-19, Asp-38, Gln-46, Tyr-51, Ala-91, Phe-129, Asp-286, and Ser-327.

This sequence belongs to the ferredoxin--NADP reductase type 2 family. As to quaternary structure, homodimer. FAD is required as a cofactor.

The catalysed reaction is 2 reduced [2Fe-2S]-[ferredoxin] + NADP(+) + H(+) = 2 oxidized [2Fe-2S]-[ferredoxin] + NADPH. The sequence is that of Ferredoxin--NADP reductase from Nocardioides sp. (strain ATCC BAA-499 / JS614).